A 566-amino-acid chain; its full sequence is Oxygen-dependent choline dehydrogenase (566 aa).

7–36 provides a ligand contact to FAD; sequence DYIICGAGSAGNVLATRLTEDPNVTVLLLE. The interval 182–204 is disordered; sequence YQQEGFGPMDRTVTPKGRRASTA. The active-site Proton acceptor is the histidine 474.

This sequence belongs to the GMC oxidoreductase family. The cofactor is FAD.

It catalyses the reaction choline + A = betaine aldehyde + AH2. It carries out the reaction betaine aldehyde + NAD(+) + H2O = glycine betaine + NADH + 2 H(+). The protein operates within amine and polyamine biosynthesis; betaine biosynthesis via choline pathway; betaine aldehyde from choline (cytochrome c reductase route): step 1/1. Its function is as follows. Involved in the biosynthesis of the osmoprotectant glycine betaine. Catalyzes the oxidation of choline to betaine aldehyde and betaine aldehyde to glycine betaine at the same rate. This chain is Oxygen-dependent choline dehydrogenase, found in Burkholderia multivorans (strain ATCC 17616 / 249).